A 208-amino-acid polypeptide reads, in one-letter code: Ion-translocating oxidoreductase complex subunit G (208 aa).

A helical transmembrane segment spans residues 9-29 (GVTLAVFAALTTGLTAMVNAL). T174 bears the FMN phosphoryl threonine mark.

The protein belongs to the RnfG family. The complex is composed of six subunits: RnfA, RnfB, RnfC, RnfD, RnfE and RnfG. FMN is required as a cofactor.

The protein resides in the cell inner membrane. Part of a membrane-bound complex that couples electron transfer with translocation of ions across the membrane. The protein is Ion-translocating oxidoreductase complex subunit G of Cronobacter sakazakii (strain ATCC BAA-894) (Enterobacter sakazakii).